A 990-amino-acid chain; its full sequence is Membrane alanyl aminopeptidase (990 aa).

Residues 1–15 (FTIFLGVALLQGVLT) form the signal peptide. A propeptide spans 16–35 (LSPIPVPEEEWAEFSRMLRD) (activation peptide). A glycan (N-linked (GlcNAc...) asparagine) is linked at Asn-295. 321 to 325 (GAMEN) contributes to the substrate binding site. His-357 is a binding site for Zn(2+). Glu-358 functions as the Proton acceptor in the catalytic mechanism. Residues His-361 and Glu-380 each coordinate Zn(2+). N-linked (GlcNAc...) asparagine glycans are attached at residues Asn-609, Asn-623, and Asn-752. Gly-968 carries the GPI-anchor amidated glycine lipid modification. A propeptide spans 969–990 (SGNIAALSVVSLLVTLAINMVA) (removed in mature form).

This sequence belongs to the peptidase M1 family. The cofactor is Zn(2+). Midgut brush-border membrane.

The protein localises to the cell membrane. Functionally, binds to the B.thuringiensis toxin, CryIA(C). The polypeptide is Membrane alanyl aminopeptidase (Manduca sexta (Tobacco hawkmoth)).